We begin with the raw amino-acid sequence, 1209 residues long: Pre-mRNA-splicing factor rse1 (1209 aa).

Belongs to the RSE1 family. As to quaternary structure, associated with the spliceosome.

The protein localises to the nucleus. Functionally, involved in pre-mRNA splicing and cell cycle control. This Neurospora crassa (strain ATCC 24698 / 74-OR23-1A / CBS 708.71 / DSM 1257 / FGSC 987) protein is Pre-mRNA-splicing factor rse1 (msp-5).